A 284-amino-acid polypeptide reads, in one-letter code: Polyamine aminopropyltransferase (284 aa).

A PABS domain is found at 2-237; the sequence is ELWYTEEQTQ…GYWLFGFASK (236 aa). Residue Gln31 participates in S-methyl-5'-thioadenosine binding. Positions 62 and 86 each coordinate spermidine. Residues Glu106 and 137–138 contribute to the S-methyl-5'-thioadenosine site; that span reads DG. The active-site Proton acceptor is Asp155. 155-158 contributes to the spermidine binding site; the sequence is DSTD. Residue Pro162 coordinates S-methyl-5'-thioadenosine.

It belongs to the spermidine/spermine synthase family. In terms of assembly, homodimer or homotetramer.

The protein resides in the cytoplasm. The catalysed reaction is S-adenosyl 3-(methylsulfanyl)propylamine + putrescine = S-methyl-5'-thioadenosine + spermidine + H(+). Its pathway is amine and polyamine biosynthesis; spermidine biosynthesis; spermidine from putrescine: step 1/1. Catalyzes the irreversible transfer of a propylamine group from the amino donor S-adenosylmethioninamine (decarboxy-AdoMet) to putrescine (1,4-diaminobutane) to yield spermidine. The sequence is that of Polyamine aminopropyltransferase from Alkaliphilus metalliredigens (strain QYMF).